The primary structure comprises 787 residues: Glycine-rich domain-containing protein 2 (787 aa).

As to expression, expressed in leaves, inflorescences, buds, flowers and immature siliques.

Its function is as follows. Involved in development and stress responses, probably through an auxin-dependent mechanism. This Arabidopsis thaliana (Mouse-ear cress) protein is Glycine-rich domain-containing protein 2.